Here is a 246-residue protein sequence, read N- to C-terminus: Ubiquinone biosynthesis O-methyltransferase (246 aa).

Residues arginine 36, glycine 60, aspartate 81, and leucine 123 each contribute to the S-adenosyl-L-methionine site.

The protein belongs to the methyltransferase superfamily. UbiG/COQ3 family.

It carries out the reaction a 3-demethylubiquinol + S-adenosyl-L-methionine = a ubiquinol + S-adenosyl-L-homocysteine + H(+). The enzyme catalyses a 3-(all-trans-polyprenyl)benzene-1,2-diol + S-adenosyl-L-methionine = a 2-methoxy-6-(all-trans-polyprenyl)phenol + S-adenosyl-L-homocysteine + H(+). Its pathway is cofactor biosynthesis; ubiquinone biosynthesis. Functionally, O-methyltransferase that catalyzes the 2 O-methylation steps in the ubiquinone biosynthetic pathway. In Rickettsia typhi (strain ATCC VR-144 / Wilmington), this protein is Ubiquinone biosynthesis O-methyltransferase.